A 323-amino-acid polypeptide reads, in one-letter code: tRNA U34 carboxymethyltransferase (323 aa).

Carboxy-S-adenosyl-L-methionine contacts are provided by residues Lys-91, Trp-105, Lys-110, Gly-130, 152-154 (DPT), 181-182 (IE), Met-196, Tyr-200, and Arg-315.

Belongs to the class I-like SAM-binding methyltransferase superfamily. CmoB family. As to quaternary structure, homotetramer.

The catalysed reaction is carboxy-S-adenosyl-L-methionine + 5-hydroxyuridine(34) in tRNA = 5-carboxymethoxyuridine(34) in tRNA + S-adenosyl-L-homocysteine + H(+). Its function is as follows. Catalyzes carboxymethyl transfer from carboxy-S-adenosyl-L-methionine (Cx-SAM) to 5-hydroxyuridine (ho5U) to form 5-carboxymethoxyuridine (cmo5U) at position 34 in tRNAs. The chain is tRNA U34 carboxymethyltransferase from Shigella dysenteriae serotype 1 (strain Sd197).